Here is a 352-residue protein sequence, read N- to C-terminus: Neutral protease 2 homolog ATEG_04941 (352 aa).

A signal peptide spans 1–19; the sequence is MRFTALATAILPLACNVLA. A propeptide spanning residues 20–175 is cleaved from the precursor; the sequence is LPAKTGEAPK…ASAVKPLDKR (156 aa). Cystine bridges form between Cys-181-Cys-253 and Cys-260-Cys-278. His-303 lines the Zn(2+) pocket. Glu-304 is an active-site residue. The Zn(2+) site is built by His-307 and Asp-318.

This sequence belongs to the peptidase M35 family. It depends on Zn(2+) as a cofactor.

It is found in the secreted. The enzyme catalyses Preferential cleavage of bonds with hydrophobic residues in P1'. Also 3-Asn-|-Gln-4 and 8-Gly-|-Ser-9 bonds in insulin B chain.. Functionally, secreted metalloproteinase that allows assimilation of proteinaceous substrates. Shows high activities on basic nuclear substrates such as histone and protamine. This Aspergillus terreus (strain NIH 2624 / FGSC A1156) protein is Neutral protease 2 homolog ATEG_04941.